Reading from the N-terminus, the 541-residue chain is Chaperonin GroEL 2 (541 aa).

Residues 29–32 (TLGP), 86–90 (DGTTT), Gly413, 478–480 (NAA), and Asp494 each bind ATP.

Belongs to the chaperonin (HSP60) family. As to quaternary structure, forms a cylinder of 14 subunits composed of two heptameric rings stacked back-to-back. Interacts with the co-chaperonin GroES.

Its subcellular location is the cytoplasm. It carries out the reaction ATP + H2O + a folded polypeptide = ADP + phosphate + an unfolded polypeptide.. Together with its co-chaperonin GroES, plays an essential role in assisting protein folding. The GroEL-GroES system forms a nano-cage that allows encapsulation of the non-native substrate proteins and provides a physical environment optimized to promote and accelerate protein folding. The protein is Chaperonin GroEL 2 of Corynebacterium jeikeium (strain K411).